We begin with the raw amino-acid sequence, 540 residues long: tRNA-2-methylthio-N(6)-dimethylallyladenosine synthase (540 aa).

The MTTase N-terminal domain occupies R4–H120. [4Fe-4S] cluster contacts are provided by C13, C49, C83, C157, C161, and C164. Residues R143–E374 form the Radical SAM core domain. Positions R376 to L468 constitute a TRAM domain. Positions W480–R540 are disordered. 2 stretches are compositionally biased toward low complexity: residues A492 to P502 and G520 to A533.

This sequence belongs to the methylthiotransferase family. MiaB subfamily. As to quaternary structure, monomer. It depends on [4Fe-4S] cluster as a cofactor.

It localises to the cytoplasm. It carries out the reaction N(6)-dimethylallyladenosine(37) in tRNA + (sulfur carrier)-SH + AH2 + 2 S-adenosyl-L-methionine = 2-methylsulfanyl-N(6)-dimethylallyladenosine(37) in tRNA + (sulfur carrier)-H + 5'-deoxyadenosine + L-methionine + A + S-adenosyl-L-homocysteine + 2 H(+). Catalyzes the methylthiolation of N6-(dimethylallyl)adenosine (i(6)A), leading to the formation of 2-methylthio-N6-(dimethylallyl)adenosine (ms(2)i(6)A) at position 37 in tRNAs that read codons beginning with uridine. The protein is tRNA-2-methylthio-N(6)-dimethylallyladenosine synthase of Frankia casuarinae (strain DSM 45818 / CECT 9043 / HFP020203 / CcI3).